We begin with the raw amino-acid sequence, 75 residues long: Acyl carrier protein (75 aa).

Residues 1 to 74 (MLDKVKEIIV…DVINYIEANK (74 aa)) form the Carrier domain. The residue at position 34 (Ser-34) is an O-(pantetheine 4'-phosphoryl)serine.

This sequence belongs to the acyl carrier protein (ACP) family. Post-translationally, 4'-phosphopantetheine is transferred from CoA to a specific serine of apo-ACP by AcpS. This modification is essential for activity because fatty acids are bound in thioester linkage to the sulfhydryl of the prosthetic group.

The protein resides in the cytoplasm. It participates in lipid metabolism; fatty acid biosynthesis. In terms of biological role, carrier of the growing fatty acid chain in fatty acid biosynthesis. The polypeptide is Acyl carrier protein (Fusobacterium nucleatum subsp. nucleatum (strain ATCC 25586 / DSM 15643 / BCRC 10681 / CIP 101130 / JCM 8532 / KCTC 2640 / LMG 13131 / VPI 4355)).